The primary structure comprises 366 residues: Phospho-N-acetylmuramoyl-pentapeptide-transferase (366 aa).

10 helical membrane passes run 27–47 (GAAITSLVLCWLLGRPMISLL), 76–96 (PTMGGLLILLAVSLSCLIWVI), 101–121 (FFWLSLLSMLFMGGIGFWDDF), 136–156 (IKLLAQAIVGVVVGIVLLADP), 176–196 (IDIGWMAIPFFILVVMGSSNA), 205–225 (GLAAGCTIGVAFVYAVFSYIS), 241–261 (GAGELTIFCSALIGACMGFLW), 264–284 (CYPAAVFMGDTGSLAIGSALG), 285–305 (VVAIILGQELLLVIAGGIFVI), and 343–363 (AVTVRFWILSLLFGLLALSSL).

The protein belongs to the glycosyltransferase 4 family. MraY subfamily. The cofactor is Mg(2+).

The protein resides in the cell inner membrane. It carries out the reaction UDP-N-acetyl-alpha-D-muramoyl-L-alanyl-gamma-D-glutamyl-meso-2,6-diaminopimeloyl-D-alanyl-D-alanine + di-trans,octa-cis-undecaprenyl phosphate = di-trans,octa-cis-undecaprenyl diphospho-N-acetyl-alpha-D-muramoyl-L-alanyl-D-glutamyl-meso-2,6-diaminopimeloyl-D-alanyl-D-alanine + UMP. It functions in the pathway cell wall biogenesis; peptidoglycan biosynthesis. In terms of biological role, catalyzes the initial step of the lipid cycle reactions in the biosynthesis of the cell wall peptidoglycan: transfers peptidoglycan precursor phospho-MurNAc-pentapeptide from UDP-MurNAc-pentapeptide onto the lipid carrier undecaprenyl phosphate, yielding undecaprenyl-pyrophosphoryl-MurNAc-pentapeptide, known as lipid I. In Methylacidiphilum infernorum (isolate V4) (Methylokorus infernorum (strain V4)), this protein is Phospho-N-acetylmuramoyl-pentapeptide-transferase.